The following is a 340-amino-acid chain: Glycerol-3-phosphate dehydrogenase [NAD(P)+] (340 aa).

Residues Ser-13, Trp-14, and Lys-108 each contribute to the NADPH site. Positions 108, 139, and 141 each coordinate sn-glycerol 3-phosphate. Ala-143 is a binding site for NADPH. Residues Lys-194, Asp-247, Ser-257, Arg-258, and Asn-259 each coordinate sn-glycerol 3-phosphate. Lys-194 acts as the Proton acceptor in catalysis. Position 258 (Arg-258) interacts with NADPH. Positions 282 and 284 each coordinate NADPH.

The protein belongs to the NAD-dependent glycerol-3-phosphate dehydrogenase family.

Its subcellular location is the cytoplasm. It catalyses the reaction sn-glycerol 3-phosphate + NAD(+) = dihydroxyacetone phosphate + NADH + H(+). It carries out the reaction sn-glycerol 3-phosphate + NADP(+) = dihydroxyacetone phosphate + NADPH + H(+). Its pathway is membrane lipid metabolism; glycerophospholipid metabolism. Catalyzes the reduction of the glycolytic intermediate dihydroxyacetone phosphate (DHAP) to sn-glycerol 3-phosphate (G3P), the key precursor for phospholipid synthesis. In Streptococcus thermophilus (strain ATCC BAA-491 / LMD-9), this protein is Glycerol-3-phosphate dehydrogenase [NAD(P)+].